The sequence spans 447 residues: Phosphoglucosamine mutase (447 aa).

S104 (phosphoserine intermediate) is an active-site residue. Mg(2+) is bound by residues S104, D243, D245, and D247. At S104 the chain carries Phosphoserine.

It belongs to the phosphohexose mutase family. Mg(2+) is required as a cofactor. Post-translationally, activated by phosphorylation.

The catalysed reaction is alpha-D-glucosamine 1-phosphate = D-glucosamine 6-phosphate. Its function is as follows. Catalyzes the conversion of glucosamine-6-phosphate to glucosamine-1-phosphate. This is Phosphoglucosamine mutase from Corynebacterium efficiens (strain DSM 44549 / YS-314 / AJ 12310 / JCM 11189 / NBRC 100395).